Here is a 321-residue protein sequence, read N- to C-terminus: Cytochrome c biogenesis protein CcsA (321 aa).

8 helical membrane-spanning segments follow: residues 17–37, 48–68, 71–91, 98–118, 143–163, 225–245, 259–273, and 286–306; these read VVSI…FVGL, TFFC…HLPI, LYES…VPYF, LSTI…WGLL, MVSG…LLVI, ILSI…VWAN, TWAF…IYFH, and AIVA…VNLL.

The protein belongs to the CcmF/CycK/Ccl1/NrfE/CcsA family. In terms of assembly, may interact with Ccs1.

It is found in the plastid. Its subcellular location is the chloroplast thylakoid membrane. Functionally, required during biogenesis of c-type cytochromes (cytochrome c6 and cytochrome f) at the step of heme attachment. The chain is Cytochrome c biogenesis protein CcsA from Populus trichocarpa (Western balsam poplar).